Consider the following 125-residue polypeptide: U-scoloptoxin(05)-Sm1a (125 aa).

A signal peptide spans 1–20; the sequence is MNVLYTKIFFILILTRTSSA.

Belongs to the scoloptoxin-05 family. In terms of processing, contains 4 disulfide bonds. As to expression, expressed by the venom gland.

Its subcellular location is the secreted. The chain is U-scoloptoxin(05)-Sm1a from Scolopendra morsitans (Tanzanian blue ringleg centipede).